The sequence spans 95 residues: Toxin HigB-1 (95 aa).

Functionally, toxic component of a type II toxin-antitoxin (TA) system. Inhibits translation by cleavage of mRNA. The protein is Toxin HigB-1 (higB-1) of Vibrio cholerae serotype O1 (strain ATCC 39315 / El Tor Inaba N16961).